Reading from the N-terminus, the 540-residue chain is Glucose-6-phosphate isomerase (540 aa).

The active-site Proton donor is the E351. Residues H382 and K506 contribute to the active site.

The protein belongs to the GPI family.

The protein localises to the cytoplasm. It catalyses the reaction alpha-D-glucose 6-phosphate = beta-D-fructose 6-phosphate. Its pathway is carbohydrate biosynthesis; gluconeogenesis. It functions in the pathway carbohydrate degradation; glycolysis; D-glyceraldehyde 3-phosphate and glycerone phosphate from D-glucose: step 2/4. Its function is as follows. Catalyzes the reversible isomerization of glucose-6-phosphate to fructose-6-phosphate. This chain is Glucose-6-phosphate isomerase, found in Corynebacterium glutamicum (strain ATCC 13032 / DSM 20300 / JCM 1318 / BCRC 11384 / CCUG 27702 / LMG 3730 / NBRC 12168 / NCIMB 10025 / NRRL B-2784 / 534).